A 119-amino-acid polypeptide reads, in one-letter code: Small ribosomal subunit protein uS13 (119 aa).

The disordered stretch occupies residues 94–119 (GLPVRGQRTQTNARTRKGPRRGPAGK).

The protein belongs to the universal ribosomal protein uS13 family. As to quaternary structure, part of the 30S ribosomal subunit. Forms a loose heterodimer with protein S19. Forms two bridges to the 50S subunit in the 70S ribosome.

Located at the top of the head of the 30S subunit, it contacts several helices of the 16S rRNA. In the 70S ribosome it contacts the 23S rRNA (bridge B1a) and protein L5 of the 50S subunit (bridge B1b), connecting the 2 subunits; these bridges are implicated in subunit movement. Contacts the tRNAs in the A and P-sites. The sequence is that of Small ribosomal subunit protein uS13 from Alkalilimnicola ehrlichii (strain ATCC BAA-1101 / DSM 17681 / MLHE-1).